The chain runs to 249 residues: Aquaporin TIP2-1 (249 aa).

A run of 2 helical transmembrane segments spans residues 20-40 (AYVAEFIATLLFVFAGVGSAI) and 54-74 (AGLVAIAIAHALALFVGVSVA). Residues 83-85 (NPA) carry the NPA 1 motif. The next 3 membrane-spanning stretches (helical) occupy residues 102-122 (VFYWVAQLLGATVACLLLGFV), 141-161 (GVVFEVVITFALVYTVYATAA), and 168-188 (LGTIAPIAIGFIVGANILAAG). The short motif at 196–198 (NPA) is the NPA 2 element. Residues 217 to 237 (WVGPLVGGGLAGLVYGDVFIG) form a helical membrane-spanning segment.

It belongs to the MIP/aquaporin (TC 1.A.8) family. TIP (TC 1.A.8.10) subfamily.

The protein localises to the vacuole membrane. Functionally, aquaporins facilitate the transport of water and small neutral solutes across cell membranes. The polypeptide is Aquaporin TIP2-1 (TIP2-1) (Zea mays (Maize)).